Here is a 198-residue protein sequence, read N- to C-terminus: Ribonuclease HII (198 aa).

The region spanning 10 to 198 is the RNase H type-2 domain; it reads QLVAGVDEVG…PVKRALGLAS (189 aa). A divalent metal cation-binding residues include Asp-16, Glu-17, and Asp-108.

The protein belongs to the RNase HII family. Requires Mn(2+) as cofactor. The cofactor is Mg(2+).

The protein resides in the cytoplasm. It catalyses the reaction Endonucleolytic cleavage to 5'-phosphomonoester.. Functionally, endonuclease that specifically degrades the RNA of RNA-DNA hybrids. This chain is Ribonuclease HII, found in Escherichia coli O81 (strain ED1a).